A 388-amino-acid polypeptide reads, in one-letter code: LL-diaminopimelate aminotransferase (388 aa).

Residues Tyr-13, Gly-38, Lys-102, Tyr-126, and Asn-176 each coordinate substrate. Pyridoxal 5'-phosphate contacts are provided by residues 101–102 (SK), Tyr-126, Asn-176, Tyr-207, and 235–237 (SLS). The residue at position 238 (Lys-238) is an N6-(pyridoxal phosphate)lysine. Position 246 (Arg-246) interacts with pyridoxal 5'-phosphate. Position 364 (Arg-364) interacts with substrate.

The protein belongs to the class-I pyridoxal-phosphate-dependent aminotransferase family. LL-diaminopimelate aminotransferase subfamily. In terms of assembly, homodimer. The cofactor is pyridoxal 5'-phosphate.

The catalysed reaction is (2S,6S)-2,6-diaminopimelate + 2-oxoglutarate = (S)-2,3,4,5-tetrahydrodipicolinate + L-glutamate + H2O + H(+). The protein operates within amino-acid biosynthesis; L-lysine biosynthesis via DAP pathway; LL-2,6-diaminopimelate from (S)-tetrahydrodipicolinate (aminotransferase route): step 1/1. Involved in the synthesis of meso-diaminopimelate (m-DAP or DL-DAP), required for both lysine and peptidoglycan biosynthesis. Catalyzes the direct conversion of tetrahydrodipicolinate to LL-diaminopimelate. This chain is LL-diaminopimelate aminotransferase, found in Dehalococcoides mccartyi (strain CBDB1).